Consider the following 362-residue polypeptide: 3-dehydroquinate synthase (362 aa).

Residues 70-75 (DGEQYK), 104-108 (GVIGD), 128-129 (TT), K141, and K150 each bind NAD(+). E183, H246, and H263 together coordinate Zn(2+).

It belongs to the sugar phosphate cyclases superfamily. Dehydroquinate synthase family. NAD(+) is required as a cofactor. The cofactor is Co(2+). It depends on Zn(2+) as a cofactor.

The protein resides in the cytoplasm. It catalyses the reaction 7-phospho-2-dehydro-3-deoxy-D-arabino-heptonate = 3-dehydroquinate + phosphate. Its pathway is metabolic intermediate biosynthesis; chorismate biosynthesis; chorismate from D-erythrose 4-phosphate and phosphoenolpyruvate: step 2/7. Catalyzes the conversion of 3-deoxy-D-arabino-heptulosonate 7-phosphate (DAHP) to dehydroquinate (DHQ). This chain is 3-dehydroquinate synthase, found in Pasteurella multocida (strain Pm70).